The following is a 706-amino-acid chain: DNA helicase/primase complex-associated protein (706 aa).

Residues 203–249 are disordered; that stretch reads CPGGDGGEEGDGAEGGDGGVGGAGDGAGAGGGSSGKPPAGKRGRPTR. Positions 217-236 are enriched in gly residues; it reads GGDGGVGGAGDGAGAGGGSS.

Belongs to the herpesviridae HEPA family. Associates with the primase and the helicase to form the helicase-primase complex. Interacts with the origin-binding protein. Interacts with the polymerase catalytic subunit.

The protein localises to the host nucleus. Its function is as follows. Component of the helicase/primase complex. Unwinds the DNA at the replication forks and generates single-stranded DNA for both leading and lagging strand synthesis. The primase synthesizes short RNA primers on the lagging strand that the polymerase presumably elongates using dNTPs. The primase-associated factor has no known catalytic activity in the complex and may serve to facilitate the formation of the replisome by directly interacting with the origin-binding protein and the polymerase. The protein is DNA helicase/primase complex-associated protein (40) of Equus caballus (Horse).